Here is a 939-residue protein sequence, read N- to C-terminus: Valine--tRNA ligase (939 aa).

Residues 47–57 (PNVTGILHMGH) carry the 'HIGH' region motif. Positions 563-567 (KLSKS) match the 'KMSKS' region motif. ATP is bound at residue lysine 566. Residues 874 to 939 (EHLAKERVRL…QSILDKLASL (66 aa)) adopt a coiled-coil conformation.

This sequence belongs to the class-I aminoacyl-tRNA synthetase family. ValS type 1 subfamily. Monomer.

The protein localises to the cytoplasm. It carries out the reaction tRNA(Val) + L-valine + ATP = L-valyl-tRNA(Val) + AMP + diphosphate. In terms of biological role, catalyzes the attachment of valine to tRNA(Val). As ValRS can inadvertently accommodate and process structurally similar amino acids such as threonine, to avoid such errors, it has a 'posttransfer' editing activity that hydrolyzes mischarged Thr-tRNA(Val) in a tRNA-dependent manner. The sequence is that of Valine--tRNA ligase from Chlamydia trachomatis serovar A (strain ATCC VR-571B / DSM 19440 / HAR-13).